A 280-amino-acid polypeptide reads, in one-letter code: Mastin (280 aa).

The first 15 residues, 1 to 15, serve as a signal peptide directing secretion; the sequence is MLWLLVLTAPWLGGS. Positions 16–30 are excised as a propeptide; the sequence is VPISPDPGLRHEQVG. The Peptidase S1 domain occupies 31–275; sequence IVGGCKVPAR…YVSWIHQHIP (245 aa). A disulfide bridge links Cys-62 with Cys-78. His-77 acts as the Charge relay system in catalysis. Residues Asn-106 and Asn-117 are each glycosylated (N-linked (GlcNAc...) asparagine). Asp-127 functions as the Charge relay system in the catalytic mechanism. 3 disulfides stabilise this stretch: Cys-161-Cys-234, Cys-194-Cys-215, and Cys-224-Cys-252. The active-site Charge relay system is the Ser-228.

The protein belongs to the peptidase S1 family. As to quaternary structure, oligomer; disulfide-linked. Post-translationally, N-glycosylated. Mononuclear cells within skin, intestine, trachea and lung parenchyma, and polymorphonuclear leukocytes within capillaries and blood.

The protein localises to the cytoplasm. Its activity is regulated as follows. Inhibited by leupeptin and bis(5-amidino-2-benzimidazolyl)methane (BABIM). Functionally, trypsin-like serine protease. Has a preference for extended substrates with basic residues at the P1 position; Arg is preferred over Lys. Active towards calcitonin gene-related peptide and gelatin. Not active towards substance P, vasoactive intestinal peptide, type I collagen or azocasein. This Canis lupus familiaris (Dog) protein is Mastin.